The sequence spans 142 residues: MGIAKEFREFAVKGNVIDLAVGVIIGGAFGKIVDSVVSDLIMPVVGLVFGKLDFSNLFIVLGSVPEGTPYTLEAIRKAGVPVLAYGNFITVAVNFVILAFIIFVMVKQINRLKRETPVEPPAPPATPEDIQLLREIRDSLKR.

3 helical membrane passes run 10–30, 40–60, and 86–106; these read FAVKGNVIDLAVGVIIGGAFG, LIMPVVGLVFGKLDFSNLFIV, and GNFITVAVNFVILAFIIFVMV.

The protein belongs to the MscL family. In terms of assembly, homopentamer.

It localises to the cell inner membrane. Channel that opens in response to stretch forces in the membrane lipid bilayer. May participate in the regulation of osmotic pressure changes within the cell. This is Large-conductance mechanosensitive channel from Acidovorax ebreus (strain TPSY) (Diaphorobacter sp. (strain TPSY)).